We begin with the raw amino-acid sequence, 306 residues long: Homoserine O-acetyltransferase (306 aa).

The active-site Acyl-thioester intermediate is the cysteine 142. Positions 163 and 192 each coordinate substrate. Histidine 235 serves as the catalytic Proton acceptor. Residue glutamate 237 is part of the active site. Arginine 249 provides a ligand contact to substrate.

It belongs to the MetA family.

The protein localises to the cytoplasm. The enzyme catalyses L-homoserine + acetyl-CoA = O-acetyl-L-homoserine + CoA. It functions in the pathway amino-acid biosynthesis; L-methionine biosynthesis via de novo pathway; O-acetyl-L-homoserine from L-homoserine: step 1/1. In terms of biological role, transfers an acetyl group from acetyl-CoA to L-homoserine, forming acetyl-L-homoserine. The protein is Homoserine O-acetyltransferase of Brucella abortus (strain S19).